A 637-amino-acid chain; its full sequence is Chaperone protein HtpG (637 aa).

An a; substrate-binding region spans residues 1 to 345 (MTAAQKETLG…SNDLPLNVSR (345 aa)). A b region spans residues 346–562 (EILQDNKVTQ…DNDMSSQMQK (217 aa)). A c region spans residues 563-637 (LMESVGQAAP…LNKLMLELSK (75 aa)).

Belongs to the heat shock protein 90 family. As to quaternary structure, homodimer.

The protein resides in the cytoplasm. Its function is as follows. Molecular chaperone. Has ATPase activity. This Pseudoalteromonas translucida (strain TAC 125) protein is Chaperone protein HtpG.